The chain runs to 404 residues: MPYNFCLPSLSCRTSCSSRPCVPPSCHGYTLPGACNIPANVSNCNWFCEGSFNGSEKETMQFLNDRLASYLEKVRQLERDNAELENLIRERSQQQEPLLCPSYQSYFKTIEELQQKILCSKSENARLVVQIDNAKLAADDFRTKYQTEQSLRQLVESDINSLRRILDELTLCRSDLEAQMESLKEELLSLKQNHEQEVNTLRCQLGDRLNVEVDAAPAVDLNQVLNETRNQYEALVETNRREVEQWFATQTEELNKQVVSSSEQLQSYQAEIIELRRTVNALEIELQAQHNLRYSLENTLTESEARYSSQLSQVQSLITNVESQLAEIRSDLERQNQEYQVLLDVRARLECEINTYRSLLESEDCKLPSNPCATTNACEKPIGSCVTNPCGPRSRCGPCNTFGY.

Residues 1-56 (MPYNFCLPSLSCRTSCSSRPCVPPSCHGYTLPGACNIPANVSNCNWFCEGSFNGSE) are head. The IF rod domain maps to 56–367 (EKETMQFLND…SLLESEDCKL (312 aa)). Positions 57-91 (KETMQFLNDRLASYLEKVRQLERDNAELENLIRER) are coil 1A. The tract at residues 92-102 (SQQQEPLLCPS) is linker 1. The tract at residues 103–203 (YQSYFKTIEE…HEQEVNTLRC (101 aa)) is coil 1B. The linker 12 stretch occupies residues 204–219 (QLGDRLNVEVDAAPAV). The segment at 220-363 (DLNQVLNETR…NTYRSLLESE (144 aa)) is coil 2. The tract at residues 364 to 404 (DCKLPSNPCATTNACEKPIGSCVTNPCGPRSRCGPCNTFGY) is tail.

This sequence belongs to the intermediate filament family.

The chain is Keratin, type I cuticular Ha3-II (KRT33B) from Homo sapiens (Human).